Reading from the N-terminus, the 246-residue chain is Probable transcriptional regulatory protein CA_C2295 (246 aa).

It belongs to the TACO1 family.

The protein resides in the cytoplasm. The protein is Probable transcriptional regulatory protein CA_C2295 of Clostridium acetobutylicum (strain ATCC 824 / DSM 792 / JCM 1419 / IAM 19013 / LMG 5710 / NBRC 13948 / NRRL B-527 / VKM B-1787 / 2291 / W).